Here is a 60-residue protein sequence, read N- to C-terminus: Potassium channel toxin alpha-KTx 3.6 (60 aa).

An N-terminal signal peptide occupies residues 1 to 22; it reads MKVFFAVLITLFICSMIIGIHG. Intrachain disulfides connect Cys-29–Cys-49, Cys-35–Cys-54, and Cys-39–Cys-56. Position 59 is a lysine amide (Lys-59).

It belongs to the short scorpion toxin superfamily. Potassium channel inhibitor family. Alpha-KTx 03 subfamily. In terms of tissue distribution, expressed by the venom gland.

It is found in the secreted. Its function is as follows. Blocks voltage-gated potassium channels. At 2 uM, blocks rat Kv1.1/KCNA1 and Kv1.3/KCNA3, has a strong effect on rat Kv1.2/KCNA2 and Kv1.6/KCNA6 as well as a moderate effect on Shaker IR. The protein is Potassium channel toxin alpha-KTx 3.6 of Olivierus martensii (Manchurian scorpion).